Reading from the N-terminus, the 341-residue chain is Small ribosomal subunit protein uS3 (341 aa).

One can recognise a KH type-2 domain in the interval 38–106; that stretch reads IRRMMTRGME…QVQLNILEVK (69 aa). Disordered stretches follow at residues 224–246 and 274–341; these read RAVRGRSARREQPAAESPALETA and PAGQ…TKEG. Low complexity-rich tracts occupy residues 285-303 and 311-333; these read AEQPVVTAEPAAAAAVTGE and AAPAEPTTSAAAEEAPGGADAPS.

It belongs to the universal ribosomal protein uS3 family. In terms of assembly, part of the 30S ribosomal subunit. Forms a tight complex with proteins S10 and S14.

In terms of biological role, binds the lower part of the 30S subunit head. Binds mRNA in the 70S ribosome, positioning it for translation. The chain is Small ribosomal subunit protein uS3 from Acidothermus cellulolyticus (strain ATCC 43068 / DSM 8971 / 11B).